The primary structure comprises 307 residues: Dof zinc finger protein DOF5.4 (307 aa).

The segment at 51 to 105 (LKCPRCNSLNTKFCYYNNYNLSQPRHFCKNCRRYWTKGGVLRNVPVGGGCRKAKR) adopts a Dof-type zinc-finger fold. Residues C53, C56, C78, and C81 each coordinate Zn(2+). A disordered region spans residues 96 to 147 (VGGGCRKAKRSKTKQVPSSSSADKPTTTQDDHHVEEKSSTGSHSSSESSSLT). The segment covering 109-123 (KQVPSSSSADKPTTT) has biased composition (polar residues). Residues 124 to 133 (QDDHHVEEKS) show a composition bias toward basic and acidic residues. Over residues 134 to 147 (STGSHSSSESSSLT) the composition is skewed to low complexity.

The protein resides in the nucleus. Transcription factor that binds specifically to a 5'-AA[AG]G-3' consensus core sequence. Enhances the DNA binding of OBF transcription factors to OCS elements. In Arabidopsis thaliana (Mouse-ear cress), this protein is Dof zinc finger protein DOF5.4 (DOF5.4).